Reading from the N-terminus, the 269-residue chain is GTP cyclohydrolase FolE2 (269 aa).

This sequence belongs to the GTP cyclohydrolase IV family.

It catalyses the reaction GTP + H2O = 7,8-dihydroneopterin 3'-triphosphate + formate + H(+). The protein operates within cofactor biosynthesis; 7,8-dihydroneopterin triphosphate biosynthesis; 7,8-dihydroneopterin triphosphate from GTP: step 1/1. In terms of biological role, converts GTP to 7,8-dihydroneopterin triphosphate. The polypeptide is GTP cyclohydrolase FolE2 (Thiobacillus denitrificans (strain ATCC 25259 / T1)).